The following is a 267-amino-acid chain: Protein PERCC1 (267 aa).

Disordered regions lie at residues 19-88, 142-163, and 247-267; these read HHPF…QLLR, SLED…RPGL, and ACPE…PAEA. Over residues 28-50 the composition is skewed to acidic residues; it reads EPPETSEEEEEEEEEEEEEEGEG. Low complexity predominate over residues 74–83; the sequence is PEGPGSPETP.

Functionally, plays a critical role in intestinal function. Acts by promoting the development of enteroendocrine cells (EECs) of the gastrointestinal tract and pancreas. It is thereby required for normal enteroendocrine peptide hormone secretion. This is Protein PERCC1 from Homo sapiens (Human).